The chain runs to 222 residues: uncharacterized protein (222 aa).

The helical transmembrane segment at 7–26 (ICLVSLICISGIYFGYQYYQ) threads the bilayer. The region spanning 139 to 222 (CRSNAGYKVQ…AYNKQSCVLK (84 aa)) is the SPOR domain.

Its subcellular location is the membrane. This is an uncharacterized protein from Rickettsia prowazekii (strain Madrid E).